Here is a 416-residue protein sequence, read N- to C-terminus: Squalene synthase (416 aa).

Arg-52 and Arg-77 together coordinate NADP(+). Asp-80, Glu-83, and Asp-84 together coordinate Mg(2+). An NADP(+)-binding site is contributed by Arg-218. A helical membrane pass occupies residues 284–304; that stretch reads SVFNFCAIPQVMAIATLAACY. Lys-315 and Arg-317 together coordinate NADP(+). The chain crosses the membrane as a helical span at residues 384–404; it reads PIYLSFIMLLAALSWQYLSTL.

It belongs to the phytoene/squalene synthase family. Mg(2+) serves as cofactor.

The protein localises to the endoplasmic reticulum membrane. The catalysed reaction is 2 (2E,6E)-farnesyl diphosphate + NADPH + H(+) = squalene + 2 diphosphate + NADP(+). The enzyme catalyses 2 (2E,6E)-farnesyl diphosphate + NADH + H(+) = squalene + 2 diphosphate + NAD(+). It catalyses the reaction presqualene diphosphate + NADH + H(+) = squalene + diphosphate + NAD(+). It carries out the reaction presqualene diphosphate + NADPH + H(+) = squalene + diphosphate + NADP(+). The catalysed reaction is 2 (2E,6E)-farnesyl diphosphate = presqualene diphosphate + diphosphate. Its pathway is terpene metabolism; lanosterol biosynthesis; lanosterol from farnesyl diphosphate: step 1/3. Functionally, catalyzes the condensation of 2 farnesyl pyrophosphate (FPP) moieties to form squalene. Proceeds in two distinct steps. In the first half-reaction, two molecules of FPP react to form the stable presqualene diphosphate intermediate (PSQPP), with concomitant release of a proton and a molecule of inorganic diphosphate. In the second half-reaction, PSQPP undergoes heterolysis, isomerization, and reduction with NADPH or NADH to form squalene. It is the first committed enzyme of the sterol biosynthesis pathway. The protein is Squalene synthase (Fdft1) of Mus musculus (Mouse).